We begin with the raw amino-acid sequence, 949 residues long: Coiled-coil domain-containing protein 66 (949 aa).

A phosphothreonine mark is found at threonine 115 and threonine 121. Serine 369 carries the post-translational modification Phosphoserine. Residues 474–558 (QVEEKCRKKQ…EQRIRELAQK (85 aa)) adopt a coiled-coil conformation. The tract at residues 570 to 949 (GVDTIQIEYN…NQEENFGSSF (380 aa)) is mediates localization to cilia, centrosomes and spindle microtubules and the interaction with PCM1, CEP290, CEP104 and CSPP1. Serine 606 carries the phosphoserine modification. 2 disordered regions span residues 691 to 714 (QTKH…KRYI) and 789 to 809 (SFSK…RTQQ).

Homodimer; disulfide-linked. Interacts with CEP290. Interacts with PCM1. Interacts with ARMC9, TOGARAM1, CSPP1 and CEP104. Interacts with CDK5RAP2, CEP152, CEP192, TBG1 and PRC1.

It is found in the cytoplasm. The protein resides in the cytoskeleton. It localises to the microtubule organizing center. Its subcellular location is the centrosome. The protein localises to the centriolar satellite. It is found in the cell projection. The protein resides in the cilium. It localises to the cilium basal body. Its subcellular location is the cilium axoneme. The protein localises to the photoreceptor inner segment. It is found in the photoreceptor outer segment. Microtubule-binding protein required for ciliogenesis. May function in ciliogenesis by mediating the transport of proteins like BBS4 to the cilium, but also through the organization of the centriolar satellites. Required for the assembly of signaling-competent cilia with proper structure and length. Mediates this function in part by regulating transition zone assembly and basal body recruitment of the IFT-B complex. Cooperates with the ciliopathy proteins CSPP1 and CEP104 during cilium length regulation. Plays two important roles during cell division. First, is required for mitotic progression via regulation of spindle assembly, organization and orientation, levels of spindle microtubules (MTs), kinetochore-fiber integrity, and chromosome alignment. Second, functions during cytokinesis in part by regulating assembly and organization of central spindle and midbody MTs Plays a role in retina morphogenesis and/or homeostasis. This Pongo abelii (Sumatran orangutan) protein is Coiled-coil domain-containing protein 66.